The primary structure comprises 201 residues: Small ribosomal subunit protein uS5 (201 aa).

Residues 1-28 are disordered; sequence MAHQNEQRGGGDRGRGRGRGRDRDQERD. In terms of domain architecture, S5 DRBM spans 31–94; the sequence is LVDKLVHINR…DEAKKNMIRV (64 aa). Residues 173 to 201 form a disordered region; the sequence is SVAAKRGLKVGDLVNRRDDGASSPEAIEA.

The protein belongs to the universal ribosomal protein uS5 family. Part of the 30S ribosomal subunit. Contacts proteins S4 and S8.

In terms of biological role, with S4 and S12 plays an important role in translational accuracy. Its function is as follows. Located at the back of the 30S subunit body where it stabilizes the conformation of the head with respect to the body. The protein is Small ribosomal subunit protein uS5 of Maricaulis maris (strain MCS10) (Caulobacter maris).